Here is a 234-residue protein sequence, read N- to C-terminus: Ubiquitin carboxyl-terminal hydrolase 3 (234 aa).

The UCH catalytic domain occupies 12-232; sequence RWLPLESNPD…LNFNLIAISK (221 aa). Residue Cys-101 is the Nucleophile of the active site. His-172 (proton donor) is an active-site residue.

It belongs to the peptidase C12 family.

The catalysed reaction is Thiol-dependent hydrolysis of ester, thioester, amide, peptide and isopeptide bonds formed by the C-terminal Gly of ubiquitin (a 76-residue protein attached to proteins as an intracellular targeting signal).. The chain is Ubiquitin carboxyl-terminal hydrolase 3 from Arabidopsis thaliana (Mouse-ear cress).